Here is a 153-residue protein sequence, read N- to C-terminus: Transcriptional repressor NrdR (153 aa).

The segment at 3 to 34 (CPFCHNQDTRVIDSRAAEEGTAIRRRRSCPAC) is a zinc-finger region. The region spanning 46–136 (LMVTKRSGAT…VYRSFESLED (91 aa)) is the ATP-cone domain.

Belongs to the NrdR family. The cofactor is Zn(2+).

Functionally, negatively regulates transcription of bacterial ribonucleotide reductase nrd genes and operons by binding to NrdR-boxes. The chain is Transcriptional repressor NrdR from Thermobifida fusca (strain YX).